The chain runs to 257 residues: Acetylglutamate kinase (257 aa).

Residues Gly-43 to Gly-44, Arg-65, and Asn-157 contribute to the substrate site. ATP-binding positions include Asp-180–Leu-185 and Ile-208–Thr-210.

This sequence belongs to the acetylglutamate kinase family. ArgB subfamily. Homodimer.

Its subcellular location is the cytoplasm. The enzyme catalyses N-acetyl-L-glutamate + ATP = N-acetyl-L-glutamyl 5-phosphate + ADP. It participates in amino-acid biosynthesis; L-arginine biosynthesis; N(2)-acetyl-L-ornithine from L-glutamate: step 2/4. Catalyzes the ATP-dependent phosphorylation of N-acetyl-L-glutamate. The polypeptide is Acetylglutamate kinase (Salmonella schwarzengrund (strain CVM19633)).